Here is a 374-residue protein sequence, read N- to C-terminus: Translocating chain-associated membrane protein 1 (374 aa).

Residues Met1–Cys29 are Cytoplasmic-facing. Residues Val30–Phe50 form a helical membrane-spanning segment. Over Val51 to Ala81 the chain is Lumenal. N-linked (GlcNAc...) asparagine glycosylation is present at Asn56. A helical transmembrane segment spans residues Thr82–Leu102. Residues Asp103 to Glu121 are Cytoplasmic-facing. Positions Ser117–His326 constitute a TLC domain. A helical membrane pass occupies residues Ser122–Ser142. Over Glu143–Asn159 the chain is Lumenal. The helical transmembrane segment at Leu160 to Phe180 threads the bilayer. Topologically, residues Pro181–Asp192 are cytoplasmic. A helical membrane pass occupies residues Ile193–Leu213. Residue Asn214 is a topological domain, lumenal. A helical membrane pass occupies residues Leu215 to Ile235. Topologically, residues Ser236–Ser251 are cytoplasmic. Residues Leu252–Val272 form a helical membrane-spanning segment. At Gly273–Arg297 the chain is on the lumenal side. Residues Ile298–Phe318 form a helical membrane-spanning segment. Residues Gln319–Ser374 are Cytoplasmic-facing. The tract at residues Ala331–Ser374 is disordered. Over residues Val334–Arg347 the composition is skewed to basic residues. Polar residues predominate over residues Asn352–Ala363. Position 365 is a phosphoserine (Ser365).

The protein belongs to the TRAM family. Interacts with SEC61B. May interact with Derlin-1/DERL1. In terms of processing, N-glycosylated.

The protein resides in the endoplasmic reticulum membrane. Involved in the translocation of nascent protein chains into or through the endoplasmic reticulum (ER) membrane by facilitating the proper chain positioning at the SEC61 channel. Regulates the exposure of nascent secretory protein chain to the cytosol during translocation into the ER. May affect the phospholipid bilayer in the vicinity of the lateral gate of the SEC61 channel, thereby facilitating ER protein transport. Intimately associates with transmembrane (TM) domain of nascent membrane proteins during the entire integration process into the ER membrane. Associates with the second TM domain of G-protein-coupled receptor opsin/OPSD nascent chain in the ER membrane, which may facilitate its integration into the membrane. Under conditions of ER stress, participates in the disposal of misfolded ER membrane proteins during the unfolded protein response (UPR), an integrated stress response (ISR) pathway, by selectively retrotranslocating misfolded ER-membrane proteins from the ER into the cytosol where they are ubiquitinated and degraded by the proteasome. This is Translocating chain-associated membrane protein 1 (TRAM1) from Bos taurus (Bovine).